We begin with the raw amino-acid sequence, 96 residues long: Protein RnfH (96 aa).

This sequence belongs to the UPF0125 (RnfH) family.

In Cronobacter sakazakii (strain ATCC BAA-894) (Enterobacter sakazakii), this protein is Protein RnfH.